We begin with the raw amino-acid sequence, 198 residues long: MKKFLFSLCLLSSTVLASPQSELTERLNQNAGFEAGFTQKVLSPEGDVLMQGEGDVKILRPNLFRWHTQTPDENLLVTDGNTLWYYNPFVEQVTLMGLEKATTQTPFVLLTRNKASDWDNYSVSQNGDAFTVSPKADSAVKSEFIVRIQENGKVTGFSVVEQDGQRSDFDFTKFEAKKPAKDNFTFAIPDGVDIDDQR.

Positions 1–17 (MKKFLFSLCLLSSTVLA) are cleaved as a signal peptide.

The protein belongs to the LolA family. In terms of assembly, monomer.

Its subcellular location is the periplasm. Its function is as follows. Participates in the translocation of lipoproteins from the inner membrane to the outer membrane. Only forms a complex with a lipoprotein if the residue after the N-terminal Cys is not an aspartate (The Asp acts as a targeting signal to indicate that the lipoprotein should stay in the inner membrane). In Aliivibrio fischeri (strain ATCC 700601 / ES114) (Vibrio fischeri), this protein is Outer-membrane lipoprotein carrier protein.